Reading from the N-terminus, the 277-residue chain is MIOREX complex component 2 (277 aa).

This sequence belongs to the NAD(P)-dependent epimerase/dehydratase family. Associates with the mitochondrial ribosome. Component of a multi-subunit COQ enzyme complex.

It is found in the mitochondrion. It participates in cofactor biosynthesis; ubiquinone biosynthesis. Functionally, component of MIOREX complexes, large expressome-like assemblies of ribosomes with factors involved in all the steps of post-transcriptional gene expression. Component of a multi-subunit COQ enzyme complex required for coenzyme Q biosynthesis. The protein is MIOREX complex component 2 of Saccharomyces cerevisiae (strain ATCC 204508 / S288c) (Baker's yeast).